The sequence spans 293 residues: Ribosomal protein L11 methyltransferase (293 aa).

4 residues coordinate S-adenosyl-L-methionine: Thr145, Gly166, Asp188, and Asn230.

This sequence belongs to the methyltransferase superfamily. PrmA family.

The protein localises to the cytoplasm. It catalyses the reaction L-lysyl-[protein] + 3 S-adenosyl-L-methionine = N(6),N(6),N(6)-trimethyl-L-lysyl-[protein] + 3 S-adenosyl-L-homocysteine + 3 H(+). In terms of biological role, methylates ribosomal protein L11. This is Ribosomal protein L11 methyltransferase from Klebsiella pneumoniae (strain 342).